A 368-amino-acid polypeptide reads, in one-letter code: Apolipoprotein A-V (368 aa).

A signal peptide spans 1–20; that stretch reads MAAVITWALALLAVFASTQA. Residue Ser-52 is modified to Phosphoserine. Residues 231–255 are a coiled coil; sequence TRKAKDLHTSIQRNLDQLRDELSAF. The segment at 305–333 is disordered; it reads EEIQHQLAPPPPSHSAFAPELGHSDSNKA.

The protein belongs to the apolipoprotein A1/A4/E family. As to quaternary structure, interacts with GPIHBP1. Interacts with SORL1; this interaction leads to APOA5 internalization and sorting either to lysosomes and degradation, or to the trans-Golgi network. In terms of processing, phosphorylated by FAM20C in the extracellular medium. Liver.

It localises to the secreted. The protein resides in the early endosome. Its subcellular location is the late endosome. The protein localises to the golgi apparatus. It is found in the trans-Golgi network. Functionally, minor apolipoprotein mainly associated with HDL and to a lesser extent with VLDL. May also be associated with chylomicrons. Important determinant of plasma triglyceride (TG) levels by both being a potent stimulator of apo-CII lipoprotein lipase (LPL) TG hydrolysis and an inhibitor of the hepatic VLDL-TG production rate (without affecting the VLDL-apoB production rate). Activates poorly lecithin:cholesterol acyltransferase (LCAT) and does not enhance efflux of cholesterol from macrophages. Binds heparin. This is Apolipoprotein A-V (Apoa5) from Mus musculus (Mouse).